The sequence spans 149 residues: Endoribonuclease YbeY (149 aa).

Residues His-101, His-105, and His-111 each coordinate Zn(2+).

The protein belongs to the endoribonuclease YbeY family. Zn(2+) serves as cofactor.

The protein localises to the cytoplasm. Single strand-specific metallo-endoribonuclease involved in late-stage 70S ribosome quality control and in maturation of the 3' terminus of the 16S rRNA. The protein is Endoribonuclease YbeY of Thermotoga neapolitana (strain ATCC 49049 / DSM 4359 / NBRC 107923 / NS-E).